A 130-amino-acid chain; its full sequence is Small ribosomal subunit protein uS8 (130 aa).

Belongs to the universal ribosomal protein uS8 family. As to quaternary structure, part of the 30S ribosomal subunit. Contacts proteins S5 and S12.

One of the primary rRNA binding proteins, it binds directly to 16S rRNA central domain where it helps coordinate assembly of the platform of the 30S subunit. This is Small ribosomal subunit protein uS8 from Yersinia enterocolitica serotype O:8 / biotype 1B (strain NCTC 13174 / 8081).